The chain runs to 438 residues: Drainin (438 aa).

A coiled-coil region spans residues 54-104 (PKSQEEVLKHQREYEEIQRKAKKTLEREAKEKEKLDAIRKEKERSLIDARK). Positions 133 to 374 (GLPPAVRGKI…RIWDLVFIEG (242 aa)) constitute a Rab-GAP TBC domain.

The protein localises to the contractile vacuole membrane. It localises to the cytoplasm. In terms of biological role, may act as a GTPase-activating protein for Rab family protein(s). Required for osmotic regulation by the contractile vacuole in hypo-osmotic environments. Essential for periodic fusion of the contractile vacuole with the plasma membrane and consequent expulsion of water from the cell body. The sequence is that of Drainin (phgA) from Dictyostelium discoideum (Social amoeba).